A 293-amino-acid chain; its full sequence is Nucleotide-binding protein Dole_0503 (293 aa).

11-18 lines the ATP pocket; sequence GLSGSGKS. Residue 62–65 participates in GTP binding; sequence DLRE.

The protein belongs to the RapZ-like family.

Its function is as follows. Displays ATPase and GTPase activities. In Desulfosudis oleivorans (strain DSM 6200 / JCM 39069 / Hxd3) (Desulfococcus oleovorans), this protein is Nucleotide-binding protein Dole_0503.